Here is a 314-residue protein sequence, read N- to C-terminus: MVKLLVAKILCMVGMFFFMLLGSLLPVKIIEMDFEKAHRSKKILSLCNTFGGGVFLATCFNALLPAVREKLKEVLTLAHISTDYPLAETIMLLGFFMTVFLEQLVLTFRKERPAFIDLETFNASSDAGSDSEYESPFMGGPRGHALYAEPHGHSHGLSVQELSRSSPLRLLSLVFALSAHSVFEGLALGLQEEGEKVVSLFVGVAIHETLVAVALGINMARSAMALRDAAKLAVTVSAMIPLGISLGLGIDSAQGMPSSVASVLLQGLAGGTFLFVTFFEILAKELEEKSDRLLKVLFLVLGYTVLAGMVFIKW.

The Extracellular portion of the chain corresponds to 1-3 (MVK). Residues 4-24 (LLVAKILCMVGMFFFMLLGSL) traverse the membrane as a helical segment. Residues 25–42 (LPVKIIEMDFEKAHRSKK) lie on the Cytoplasmic side of the membrane. The chain crosses the membrane as a helical span at residues 43–63 (ILSLCNTFGGGVFLATCFNAL). The Extracellular portion of the chain corresponds to 64–85 (LPAVREKLKEVLTLAHISTDYP). The helical transmembrane segment at 86 to 106 (LAETIMLLGFFMTVFLEQLVL) threads the bilayer. Over 107-169 (TFRKERPAFI…QELSRSSPLR (63 aa)) the chain is Cytoplasmic. Phosphoserine occurs at positions 125 and 129. Residues 170–190 (LLSLVFALSAHSVFEGLALGL) traverse the membrane as a helical segment. The Extracellular segment spans residues 191 to 196 (QEEGEK). The helical transmembrane segment at 197-217 (VVSLFVGVAIHETLVAVALGI) threads the bilayer. Residues 218 to 229 (NMARSAMALRDA) are Cytoplasmic-facing. A helical transmembrane segment spans residues 230 to 250 (AKLAVTVSAMIPLGISLGLGI). The Extracellular segment spans residues 251–262 (DSAQGMPSSVAS). The helical transmembrane segment at 263 to 283 (VLLQGLAGGTFLFVTFFEILA) threads the bilayer. The Cytoplasmic segment spans residues 284–292 (KELEEKSDR). A helical transmembrane segment spans residues 293–313 (LLKVLFLVLGYTVLAGMVFIK). A topological domain (extracellular) is located at residue Trp-314.

Belongs to the ZIP transporter (TC 2.A.5) family.

The protein resides in the cell membrane. It is found in the apical cell membrane. The enzyme catalyses Zn(2+)(in) = Zn(2+)(out). In terms of biological role, transporter for the divalent cation Zn(2+). Mediates the influx of Zn(2+) into cells from extracellular space. Controls Zn(2+) accumulation into dentate gyrus granule cells in the hippocampus. Mediates Zn(2+) reuptake from the secreted milk within the alveolar lumen. The sequence is that of Zinc transporter ZIP3 (SLC39A3) from Bos taurus (Bovine).